Consider the following 616-residue polypeptide: UvrABC system protein C (616 aa).

The GIY-YIG domain occupies 21-100; that stretch reads TCPGVYQFKN…IKDLKPRYNI (80 aa). One can recognise a UVR domain in the interval 214-249; it reads GALIRTLSAEMHRYADELRFEEAAELKIQIEGLRKY.

Belongs to the UvrC family. In terms of assembly, interacts with UvrB in an incision complex.

It localises to the cytoplasm. In terms of biological role, the UvrABC repair system catalyzes the recognition and processing of DNA lesions. UvrC both incises the 5' and 3' sides of the lesion. The N-terminal half is responsible for the 3' incision and the C-terminal half is responsible for the 5' incision. The polypeptide is UvrABC system protein C (Prosthecochloris aestuarii (strain DSM 271 / SK 413)).